We begin with the raw amino-acid sequence, 104 residues long: Large ribosomal subunit protein bL21 (104 aa).

This sequence belongs to the bacterial ribosomal protein bL21 family. Part of the 50S ribosomal subunit. Contacts protein L20.

Functionally, this protein binds to 23S rRNA in the presence of protein L20. The sequence is that of Large ribosomal subunit protein bL21 from Leptospira interrogans serogroup Icterohaemorrhagiae serovar copenhageni (strain Fiocruz L1-130).